The sequence spans 219 residues: Translation initiation factor 6 (219 aa).

Belongs to the eIF-6 family.

In terms of biological role, binds to the 50S ribosomal subunit and prevents its association with the 30S ribosomal subunit to form the 70S initiation complex. The chain is Translation initiation factor 6 from Methanosarcina mazei (strain ATCC BAA-159 / DSM 3647 / Goe1 / Go1 / JCM 11833 / OCM 88) (Methanosarcina frisia).